A 440-amino-acid polypeptide reads, in one-letter code: Thymidine phosphorylase (440 aa).

Belongs to the thymidine/pyrimidine-nucleoside phosphorylase family. Homodimer.

The catalysed reaction is thymidine + phosphate = 2-deoxy-alpha-D-ribose 1-phosphate + thymine. It functions in the pathway pyrimidine metabolism; dTMP biosynthesis via salvage pathway; dTMP from thymine: step 1/2. Its function is as follows. The enzymes which catalyze the reversible phosphorolysis of pyrimidine nucleosides are involved in the degradation of these compounds and in their utilization as carbon and energy sources, or in the rescue of pyrimidine bases for nucleotide synthesis. This Klebsiella pneumoniae subsp. pneumoniae (strain ATCC 700721 / MGH 78578) protein is Thymidine phosphorylase.